The chain runs to 1104 residues: Transposon Ty4-P Gag-Pol polyprotein (1104 aa).

Residues V48–N112 adopt a coiled-coil conformation. The ty4 protease stretch occupies residues Q381–Y501. The active-site For protease activity; shared with dimeric partner is D414. An integrase-type zinc finger-like region spans residues A539–C599. Residues T619–P786 form the Integrase catalytic domain. Residues D630 and D695 each coordinate Mg(2+).

As to quaternary structure, the protease is a homodimer, whose active site consists of two apposed aspartic acid residues. Post-translationally, proteolytically processed into capsid protein (CA), Ty4 protease (PR), integrase (IN) and reverse transcriptase/ribonuclease H (RT) proteins. Initially, virus-like particles (VLPs) are composed of the structural unprocessed proteins Gag and Gag-Pol, and also contain the host initiator methionine tRNA (tRNA(i)-Met) which serves as a primer for minus-strand DNA synthesis, and a dimer of genomic Ty RNA. Processing of the polyproteins occurs within the particle and proceeds by an ordered pathway, called maturation. First, the protease (PR) is released by autocatalytic cleavage of the Gag-Pol polyprotein, and this cleavage is a prerequisite for subsequent processing at the remaining sites to release the mature structural and catalytic proteins. Maturation takes place prior to the RT reaction and is required to produce transposition-competent VLPs.

The protein resides in the cytoplasm. Its subcellular location is the nucleus. It catalyses the reaction DNA(n) + a 2'-deoxyribonucleoside 5'-triphosphate = DNA(n+1) + diphosphate. It carries out the reaction Endonucleolytic cleavage to 5'-phosphomonoester.. Capsid protein (CA) is the structural component of the virus-like particle (VLP), forming the shell that encapsulates the retrotransposons dimeric RNA genome. Its function is as follows. The aspartyl protease (PR) mediates the proteolytic cleavages of the Gag and Gag-Pol polyproteins after assembly of the VLP. In terms of biological role, reverse transcriptase/ribonuclease H (RT) is a multifunctional enzyme that catalyzes the conversion of the retro-elements RNA genome into dsDNA within the VLP. The enzyme displays a DNA polymerase activity that can copy either DNA or RNA templates, and a ribonuclease H (RNase H) activity that cleaves the RNA strand of RNA-DNA heteroduplexes during plus-strand synthesis and hydrolyzes RNA primers. The conversion leads to a linear dsDNA copy of the retrotransposon that includes long terminal repeats (LTRs) at both ends. Functionally, integrase (IN) targets the VLP to the nucleus, where a subparticle preintegration complex (PIC) containing at least integrase and the newly synthesized dsDNA copy of the retrotransposon must transit the nuclear membrane. Once in the nucleus, integrase performs the integration of the dsDNA into the host genome. The polypeptide is Transposon Ty4-P Gag-Pol polyprotein (TY4B-P) (Saccharomyces cerevisiae (strain ATCC 204508 / S288c) (Baker's yeast)).